Reading from the N-terminus, the 867-residue chain is Protein translocase subunit SecA (867 aa).

ATP is bound by residues Gln86, 104–108, and Asp499; that span reads GEGKT. Zn(2+) is bound by residues Cys848, Cys850, Cys859, and His860.

The protein belongs to the SecA family. Monomer and homodimer. Part of the essential Sec protein translocation apparatus which comprises SecA, SecYEG and auxiliary proteins SecDF-YajC and YidC. Zn(2+) is required as a cofactor.

The protein resides in the cell membrane. The protein localises to the cytoplasm. It catalyses the reaction ATP + H2O + cellular proteinSide 1 = ADP + phosphate + cellular proteinSide 2.. Part of the Sec protein translocase complex. Interacts with the SecYEG preprotein conducting channel. Has a central role in coupling the hydrolysis of ATP to the transfer of proteins into and across the cell membrane, serving both as a receptor for the preprotein-SecB complex and as an ATP-driven molecular motor driving the stepwise translocation of polypeptide chains across the membrane. This Wolbachia sp. subsp. Brugia malayi (strain TRS) protein is Protein translocase subunit SecA.